The primary structure comprises 74 residues: DNA-directed RNA polymerase subunit omega (74 aa).

This sequence belongs to the RNA polymerase subunit omega family. The RNAP catalytic core consists of 2 alpha, 1 beta, 1 beta' and 1 omega subunit. When a sigma factor is associated with the core the holoenzyme is formed, which can initiate transcription.

It catalyses the reaction RNA(n) + a ribonucleoside 5'-triphosphate = RNA(n+1) + diphosphate. Promotes RNA polymerase assembly. Latches the N- and C-terminal regions of the beta' subunit thereby facilitating its interaction with the beta and alpha subunits. The chain is DNA-directed RNA polymerase subunit omega from Solidesulfovibrio magneticus (strain ATCC 700980 / DSM 13731 / RS-1) (Desulfovibrio magneticus).